The primary structure comprises 147 residues: Large ribosomal subunit protein bL9 (147 aa).

It belongs to the bacterial ribosomal protein bL9 family.

Its function is as follows. Binds to the 23S rRNA. This chain is Large ribosomal subunit protein bL9, found in Marinomonas sp. (strain MWYL1).